The sequence spans 174 residues: Pectinesterase inhibitor 12 (174 aa).

An N-terminal signal peptide occupies residues 1–20 (MKFLVSLVIFSLFLNGFATA). 2 cysteine pairs are disulfide-bonded: Cys28–Cys43 and Cys100–Cys140. Asn129 carries N-linked (GlcNAc...) asparagine glycosylation.

It belongs to the PMEI family.

The protein resides in the secreted. It localises to the extracellular space. It is found in the apoplast. Functionally, pectin methylesterase (PME) inhibitor involved in the maintenance of cell wall integrity in response to necrotrophic pathogens. Modulates PME activity and pectin methylesterification during infection by Botrytis cinerea and contributes to resistance against the pathogen. The protein is Pectinesterase inhibitor 12 of Arabidopsis thaliana (Mouse-ear cress).